Here is a 1376-residue protein sequence, read N- to C-terminus: Protein FAM135B (1376 aa).

Residues 431–442 (NEDECEFSEESP) show a composition bias toward acidic residues. A disordered region spans residues 431 to 489 (NEDECEFSEESPSENTHVGSKPHSIQSTTVHENASFEKPNVGTKAQEDCSTEGPEQGFD). Residues 443 to 462 (SENTHVGSKPHSIQSTTVHE) show a composition bias toward polar residues.

The protein belongs to the FAM135 family.

The sequence is that of Protein FAM135B (fam135b) from Xenopus laevis (African clawed frog).